The sequence spans 110 residues: Phosphoribosyl-ATP pyrophosphatase (110 aa).

This sequence belongs to the PRA-PH family.

It localises to the cytoplasm. It carries out the reaction 1-(5-phospho-beta-D-ribosyl)-ATP + H2O = 1-(5-phospho-beta-D-ribosyl)-5'-AMP + diphosphate + H(+). Its pathway is amino-acid biosynthesis; L-histidine biosynthesis; L-histidine from 5-phospho-alpha-D-ribose 1-diphosphate: step 2/9. This is Phosphoribosyl-ATP pyrophosphatase from Pseudomonas savastanoi pv. phaseolicola (strain 1448A / Race 6) (Pseudomonas syringae pv. phaseolicola (strain 1448A / Race 6)).